Consider the following 394-residue polypeptide: Flavohemoprotein (394 aa).

Residues 1-136 (MLSENTINIV…LANVFIQREE (136 aa)) form the Globin domain. Residue His85 participates in heme b binding. Residues Tyr95 and Glu135 each act as charge relay system in the active site. Residues 147–394 (GGWRGLREFE…YECFGPHKVV (248 aa)) form a reductase region. One can recognise an FAD-binding FR-type domain in the interval 150–255 (RGLREFELVE…AAPAGDFFLD (106 aa)). Residues Tyr188 and 204 to 207 (RQYS) each bind FAD. Residue 268–273 (GVGLTP) coordinates NADP(+). An FAD-binding site is contributed by 387-390 (CFGP).

The protein belongs to the globin family. Two-domain flavohemoproteins subfamily. It in the C-terminal section; belongs to the flavoprotein pyridine nucleotide cytochrome reductase family. It depends on heme b as a cofactor. FAD serves as cofactor.

The catalysed reaction is 2 nitric oxide + NADPH + 2 O2 = 2 nitrate + NADP(+) + H(+). It catalyses the reaction 2 nitric oxide + NADH + 2 O2 = 2 nitrate + NAD(+) + H(+). In terms of biological role, is involved in NO detoxification in an aerobic process, termed nitric oxide dioxygenase (NOD) reaction that utilizes O(2) and NAD(P)H to convert NO to nitrate, which protects the bacterium from various noxious nitrogen compounds. Therefore, plays a central role in the inducible response to nitrosative stress. The polypeptide is Flavohemoprotein (Vibrio vulnificus (strain YJ016)).